Reading from the N-terminus, the 102-residue chain is Cuticle protein AM/CP1114 (102 aa).

In terms of domain architecture, Chitin-binding type R&amp;R spans 16–81 (DGNFHYSFET…VESPLLPSIP (66 aa)). Over residues 23–33 (FETSNGIQDTK) the composition is skewed to polar residues. A disordered region spans residues 23–50 (FETSNGIQDTKTGVPGSAGQSNMNGDFS).

Arthrodial membrane and calcified shell.

This is Cuticle protein AM/CP1114 from Cancer pagurus (Rock crab).